The primary structure comprises 1015 residues: Frequency clock protein (1015 aa).

8 disordered regions span residues 1-138, 183-285, 352-383, 402-465, 544-614, 629-668, 706-728, and 895-1015; these read MQPT…SADD, KRKK…QKVD, DFSP…TFSS, HVAG…DPDR, GRKI…VSAS, SPNE…NRRK, ERPD…GSSI, and SEDD…SSQG. Over residues 49–68 the composition is skewed to low complexity; it reads SAPPNDSNENSSSPRRASSG. The segment covering 69–80 has biased composition (basic and acidic residues); the sequence is ESHETGQSDAKK. Residues 82-95 are compositionally biased toward polar residues; sequence FNQSNQNPTATFDS. A compositionally biased stretch (basic and acidic residues) spans 107-117; sequence KESDSSNEDKP. 3 stretches are compositionally biased toward low complexity: residues 203–216, 228–267, and 356–368; these read SPNT…STTK, SGSG…SGTS, and QQQQ…QQQQ. Residues 369–383 are compositionally biased toward polar residues; it reads PKSNFITNPGATFSS. A compositionally biased stretch (low complexity) spans 431 to 442; sequence NSSSNGNDSGTN. Residues 443 to 453 are compositionally biased toward pro residues; that stretch reads PSPPMPPPPEQ. The segment covering 454–465 has biased composition (basic and acidic residues); sequence RPTRPRDLDPDR. Positions 556-570 are enriched in polar residues; the sequence is TKFSSESSGDLSQRS. The Nuclear localization signal signature appears at 584 to 588; that stretch reads HKRQK. Low complexity predominate over residues 590–600; it reads GHSTGDSGSSG. Positions 629 to 643 are enriched in polar residues; it reads SPNEQSSMEDGTLSS. 2 stretches are compositionally biased toward acidic residues: residues 895–909 and 934–946; these read SEDD…EFNS and SGDE…EDDI. The span at 976–1003 shows a compositional bias: low complexity; the sequence is GSSRGRSNSASAEAVLRAGGSSAATAGG.

Belongs to the FRQ family.

The protein resides in the nucleus. Circadian clock component involved in the generation of biological rhythms, in particular in rhythm stability, period length, and temperature compensation. Behaves as a negative element in circadian transcriptional loop. The polypeptide is Frequency clock protein (FRQ) (Trichoderma spinulosum (Hypocrea spinulosa)).